A 386-amino-acid chain; its full sequence is Diaminopimelate decarboxylase (386 aa).

Residue lysine 46 is modified to N6-(pyridoxal phosphate)lysine. Residues glycine 214 and 246–249 (EIGR) contribute to the pyridoxal 5'-phosphate site. Substrate is bound by residues arginine 249, arginine 285, and tyrosine 289. The active-site Proton donor is cysteine 314. 2 residues coordinate substrate: glutamate 315 and tyrosine 343. Tyrosine 343 provides a ligand contact to pyridoxal 5'-phosphate.

The protein belongs to the Orn/Lys/Arg decarboxylase class-II family. LysA subfamily. In terms of assembly, homodimer. It depends on pyridoxal 5'-phosphate as a cofactor.

It carries out the reaction meso-2,6-diaminopimelate + H(+) = L-lysine + CO2. Its pathway is amino-acid biosynthesis; L-lysine biosynthesis via DAP pathway; L-lysine from DL-2,6-diaminopimelate: step 1/1. Its function is as follows. Specifically catalyzes the decarboxylation of meso-diaminopimelate (meso-DAP) to L-lysine. This is Diaminopimelate decarboxylase from Thermotoga maritima (strain ATCC 43589 / DSM 3109 / JCM 10099 / NBRC 100826 / MSB8).